A 95-amino-acid chain; its full sequence is Small ribosomal subunit protein uS19 (95 aa).

The interval 73 to 95 is disordered; the sequence is EFSPTRTYRGHGADKNAKGSKKK.

This sequence belongs to the universal ribosomal protein uS19 family.

Protein S19 forms a complex with S13 that binds strongly to the 16S ribosomal RNA. The chain is Small ribosomal subunit protein uS19 from Deinococcus geothermalis (strain DSM 11300 / CIP 105573 / AG-3a).